A 281-amino-acid polypeptide reads, in one-letter code: Apolipoprotein Eb (281 aa).

Positions 1-18 are cleaved as a signal peptide; it reads MRSLVVFFALAVLTGCQA. A propeptide spanning residues 19-24 is cleaved from the precursor; it reads RSLFQA. The segment at 34 to 66 is 3 X approximate tandem repeats; that stretch reads MVDRFWQYVSELNTQTDGMVQNIKGSQLSRELD. 9 repeat units span residues 67 to 88, 89 to 110, 111 to 132, 133 to 154, 155 to 176, 177 to 199, 200 to 227, 228 to 249, and 254 to 281. The interval 67–281 is 9 X 22 AA approximate tandem repeats; that stretch reads TLITDTMAEL…EATAALPTQA (215 aa).

It belongs to the apolipoprotein A1/A4/E family. As to quaternary structure, homotetramer.

The protein localises to the secreted. It is found in the extracellular space. Its subcellular location is the extracellular matrix. In terms of biological role, APOE is an apolipoprotein, a protein associating with lipid particles, that mainly functions in lipoprotein-mediated lipid transport between organs via the plasma and interstitial fluids. APOE is a core component of plasma lipoproteins and is involved in their production, conversion and clearance. Apolipoproteins are amphipathic molecules that interact both with lipids of the lipoprotein particle core and the aqueous environment of the plasma. This Danio rerio (Zebrafish) protein is Apolipoprotein Eb (apoeb).